The chain runs to 146 residues: Deoxyuridine 5'-triphosphate nucleotidohydrolase (146 aa).

Substrate-binding positions include 66–68, Asn-79, 83–85, and Lys-93; these read RSG and TID.

Belongs to the dUTPase family. Mg(2+) serves as cofactor.

It carries out the reaction dUTP + H2O = dUMP + diphosphate + H(+). It functions in the pathway pyrimidine metabolism; dUMP biosynthesis; dUMP from dCTP (dUTP route): step 2/2. Its function is as follows. This enzyme is involved in nucleotide metabolism: it produces dUMP, the immediate precursor of thymidine nucleotides and it decreases the intracellular concentration of dUTP so that uracil cannot be incorporated into DNA. The chain is Deoxyuridine 5'-triphosphate nucleotidohydrolase from Zymomonas mobilis subsp. mobilis (strain ATCC 31821 / ZM4 / CP4).